An 856-amino-acid chain; its full sequence is DNA mismatch repair protein MutS (856 aa).

609–616 (GPNMSGKS) provides a ligand contact to ATP.

The protein belongs to the DNA mismatch repair MutS family.

In terms of biological role, this protein is involved in the repair of mismatches in DNA. It is possible that it carries out the mismatch recognition step. This protein has a weak ATPase activity. The sequence is that of DNA mismatch repair protein MutS from Finegoldia magna (strain ATCC 29328 / DSM 20472 / WAL 2508) (Peptostreptococcus magnus).